The chain runs to 252 residues: Trans-aconitate 2-methyltransferase (252 aa).

The protein belongs to the methyltransferase superfamily. Tam family.

It is found in the cytoplasm. It catalyses the reaction trans-aconitate + S-adenosyl-L-methionine = (E)-3-(methoxycarbonyl)pent-2-enedioate + S-adenosyl-L-homocysteine. Functionally, catalyzes the S-adenosylmethionine monomethyl esterification of trans-aconitate. The chain is Trans-aconitate 2-methyltransferase from Escherichia coli (strain UTI89 / UPEC).